Consider the following 1058-residue polypeptide: Ubiquitin-like modifier-activating enzyme 1 (1058 aa).

The disordered stretch occupies residues 1 to 46 (MSSSPLSKKRRVSGPDPKPGSNCSSAQSVLSEVSSVPTNGMAKNGS). At Ser-2 the chain carries N-acetylserine. Phosphoserine occurs at positions 4, 13, 21, 24, and 46. Over residues 24–36 (SSAQSVLSEVSSV) the composition is skewed to low complexity. Residue Tyr-55 is modified to Phosphotyrosine. Repeat copies occupy residues 63–199 (GHEA…GQLF) and 459–611 (GSDL…QVVI). The 2 approximate repeats stretch occupies residues 63–611 (GHEAMKMLQT…GTKGNVQVVI (549 aa)). Residues Ala-478, Asp-504, Arg-515, Lys-528, and 576 to 577 (DN) contribute to the ATP site. Lys-528 bears the N6-succinyllysine mark. Residue Cys-632 is the Glycyl thioester intermediate of the active site. Lys-671 is modified (N6-acetyllysine). The residue at position 800 (Thr-800) is a Phosphothreonine. Residues Ser-810, Ser-816, Ser-820, and Ser-835 each carry the phosphoserine modification. Lys-980 bears the N6-acetyllysine mark.

The protein belongs to the ubiquitin-activating E1 family. In terms of assembly, monomer. Interacts with GAN (via BTB domain). In terms of processing, ISGylated.

The protein resides in the cytoplasm. The protein localises to the mitochondrion. Its subcellular location is the nucleus. It carries out the reaction ATP + ubiquitin + [E1 ubiquitin-activating enzyme]-L-cysteine = AMP + diphosphate + S-ubiquitinyl-[E1 ubiquitin-activating enzyme]-L-cysteine.. It participates in protein modification; protein ubiquitination. Its function is as follows. Catalyzes the first step in ubiquitin conjugation to mark cellular proteins for degradation through the ubiquitin-proteasome system. Activates ubiquitin by first adenylating its C-terminal glycine residue with ATP, and thereafter linking this residue to the side chain of a cysteine residue in E1, yielding a ubiquitin-E1 thioester and free AMP. Essential for the formation of radiation-induced foci, timely DNA repair and for response to replication stress. Promotes the recruitment of TP53BP1 and BRCA1 at DNA damage sites. The polypeptide is Ubiquitin-like modifier-activating enzyme 1 (Rattus norvegicus (Rat)).